The following is a 287-amino-acid chain: ADP-dependent (S)-NAD(P)H-hydrate dehydratase (287 aa).

A YjeF C-terminal domain is found at 7-283 (TTALVKKFIP…PEISTVMKPF (277 aa)). Ala-42 and His-159 together coordinate (6S)-NADPHX. Residues 196–200 (KGSTD) and Gly-224 each bind AMP. Asp-225 is a (6S)-NADPHX binding site.

Belongs to the NnrD/CARKD family. As to quaternary structure, homotetramer. It depends on Mg(2+) as a cofactor.

It carries out the reaction (6S)-NADHX + ADP = AMP + phosphate + NADH + H(+). The enzyme catalyses (6S)-NADPHX + ADP = AMP + phosphate + NADPH + H(+). Catalyzes the dehydration of the S-form of NAD(P)HX at the expense of ADP, which is converted to AMP. Together with NAD(P)HX epimerase, which catalyzes the epimerization of the S- and R-forms, the enzyme allows the repair of both epimers of NAD(P)HX, a damaged form of NAD(P)H that is a result of enzymatic or heat-dependent hydration. This chain is ADP-dependent (S)-NAD(P)H-hydrate dehydratase, found in Nitrosopumilus maritimus (strain SCM1).